A 141-amino-acid chain; its full sequence is 16 kDa protein (141 aa).

The tract at residues 95–116 (ESSSATRKKSHNSKNSKKKFKE) is disordered. Basic residues predominate over residues 100–113 (TRKKSHNSKNSKKK).

The polypeptide is 16 kDa protein (Tobacco rattle virus (strain PSG)).